The primary structure comprises 267 residues: Protein I267L (267 aa).

The protein belongs to the asfivirus I267L family.

This chain is Protein I267L, found in African swine fever virus (isolate Warthog/Namibia/Wart80/1980) (ASFV).